A 239-amino-acid polypeptide reads, in one-letter code: Ribose-5-phosphate isomerase A (239 aa).

Residues 30-33 (SGST), 87-90 (DGAD), and 100-103 (KGGG) contribute to the substrate site. The Proton acceptor role is filled by Glu-109. Lys-127 serves as a coordination point for substrate.

It belongs to the ribose 5-phosphate isomerase family. As to quaternary structure, homodimer.

The enzyme catalyses aldehydo-D-ribose 5-phosphate = D-ribulose 5-phosphate. It functions in the pathway carbohydrate degradation; pentose phosphate pathway; D-ribose 5-phosphate from D-ribulose 5-phosphate (non-oxidative stage): step 1/1. In terms of biological role, catalyzes the reversible conversion of ribose-5-phosphate to ribulose 5-phosphate. The protein is Ribose-5-phosphate isomerase A of Synechococcus sp. (strain CC9605).